The following is a 277-amino-acid chain: Eukaryotic translation initiation factor 3 subunit J (277 aa).

Residues 1 to 80 are disordered; the sequence is MSWDDEDFAV…PAATKNTMLD (80 aa). Residues 23-43 are compositionally biased toward acidic residues; that stretch reads WDDEFAENDDEPVLESWEDEE. Residues 50-75 show a composition bias toward low complexity; it reads KAAAAAAAKAPKKASPSPAATPAATK. A coiled-coil region spans residues 199–230; that stretch reads TVENIRQTIATLNVLMKDKEREERQARLAKVK. The interval 257–277 is disordered; that stretch reads DNDFDLGGNDNFDDFGEDDFM. The span at 267 to 277 shows a compositional bias: acidic residues; it reads NFDDFGEDDFM.

It belongs to the eIF-3 subunit J family. Component of the eukaryotic translation initiation factor 3 (eIF-3) complex.

It localises to the cytoplasm. Component of the eukaryotic translation initiation factor 3 (eIF-3) complex, which is involved in protein synthesis of a specialized repertoire of mRNAs and, together with other initiation factors, stimulates binding of mRNA and methionyl-tRNAi to the 40S ribosome. The eIF-3 complex specifically targets and initiates translation of a subset of mRNAs involved in cell proliferation. The protein is Eukaryotic translation initiation factor 3 subunit J of Kluyveromyces lactis (strain ATCC 8585 / CBS 2359 / DSM 70799 / NBRC 1267 / NRRL Y-1140 / WM37) (Yeast).